Here is a 117-residue protein sequence, read N- to C-terminus: UPF0321 protein PJ695.01c (117 aa).

A signal peptide spans 1–17; it reads MLLLLYICCLFLKFILA. N-linked (GlcNAc...) asparagine glycans are attached at residues asparagine 39, asparagine 65, asparagine 71, and asparagine 104.

The protein belongs to the UPF0321 family.

The protein is UPF0321 protein PJ695.01c of Schizosaccharomyces pombe (strain 972 / ATCC 24843) (Fission yeast).